Reading from the N-terminus, the 295-residue chain is Nucleotide-binding protein SSU98_0619 (295 aa).

Residue 12 to 19 (GMSGAGKT) coordinates ATP. 62-65 (DMRS) contributes to the GTP binding site.

The protein belongs to the RapZ-like family.

Displays ATPase and GTPase activities. The sequence is that of Nucleotide-binding protein SSU98_0619 from Streptococcus suis (strain 98HAH33).